Consider the following 359-residue polypeptide: Alanine racemase (359 aa).

Lys35 serves as the catalytic Proton acceptor; specific for D-alanine. Lys35 carries the N6-(pyridoxal phosphate)lysine modification. Arg131 contributes to the substrate binding site. The active-site Proton acceptor; specific for L-alanine is the Tyr253. Met301 lines the substrate pocket.

This sequence belongs to the alanine racemase family. Pyridoxal 5'-phosphate serves as cofactor.

It catalyses the reaction L-alanine = D-alanine. It functions in the pathway amino-acid biosynthesis; D-alanine biosynthesis; D-alanine from L-alanine: step 1/1. Functionally, catalyzes the interconversion of L-alanine and D-alanine. May also act on other amino acids. The chain is Alanine racemase (alr) from Laribacter hongkongensis (strain HLHK9).